Here is a 393-residue protein sequence, read N- to C-terminus: NAD(P)H-quinone oxidoreductase subunit H, chloroplastic (393 aa).

The protein belongs to the complex I 49 kDa subunit family. In terms of assembly, NDH is composed of at least 16 different subunits, 5 of which are encoded in the nucleus.

It localises to the plastid. It is found in the chloroplast thylakoid membrane. The catalysed reaction is a plastoquinone + NADH + (n+1) H(+)(in) = a plastoquinol + NAD(+) + n H(+)(out). The enzyme catalyses a plastoquinone + NADPH + (n+1) H(+)(in) = a plastoquinol + NADP(+) + n H(+)(out). In terms of biological role, NDH shuttles electrons from NAD(P)H:plastoquinone, via FMN and iron-sulfur (Fe-S) centers, to quinones in the photosynthetic chain and possibly in a chloroplast respiratory chain. The immediate electron acceptor for the enzyme in this species is believed to be plastoquinone. Couples the redox reaction to proton translocation, and thus conserves the redox energy in a proton gradient. The chain is NAD(P)H-quinone oxidoreductase subunit H, chloroplastic from Lolium perenne (Perennial ryegrass).